Consider the following 512-residue polypeptide: Histidine ammonia-lyase (512 aa).

Residues 142 to 144 constitute a cross-link (5-imidazolinone (Ala-Gly)); sequence ASG. Ser143 is subject to 2,3-didehydroalanine (Ser).

The protein belongs to the PAL/histidase family. Post-translationally, contains an active site 4-methylidene-imidazol-5-one (MIO), which is formed autocatalytically by cyclization and dehydration of residues Ala-Ser-Gly.

It localises to the cytoplasm. It catalyses the reaction L-histidine = trans-urocanate + NH4(+). It functions in the pathway amino-acid degradation; L-histidine degradation into L-glutamate; N-formimidoyl-L-glutamate from L-histidine: step 1/3. This chain is Histidine ammonia-lyase, found in Bartonella quintana (strain Toulouse) (Rochalimaea quintana).